Reading from the N-terminus, the 350-residue chain is Kelch domain-containing protein 8A (350 aa).

7 Kelch repeats span residues 1–31 (MEVP…ETGG), 32–79 (QVYA…ALGK), 81–127 (IMVI…AKDY), 128–175 (RVYA…LRGS), 176–222 (KIYV…TLDN), 224–278 (LYSL…GLSG), and 279–326 (RVIV…VFKN).

The sequence is that of Kelch domain-containing protein 8A (Klhdc8a) from Mus musculus (Mouse).